A 183-amino-acid chain; its full sequence is DELTA-miturgitoxin-Cp1c (183 aa).

Residues methionine 1–serine 20 form the signal peptide. Residues glutamate 21–arginine 47 constitute a propeptide that is removed on maturation. The short motif at aspartate 44–arginine 47 is the Processing quadruplet motif element. 8 cysteine pairs are disulfide-bonded: cysteine 51–cysteine 66, cysteine 58–cysteine 75, cysteine 65–cysteine 88, cysteine 77–cysteine 86, cysteine 115–cysteine 130, cysteine 122–cysteine 139, cysteine 129–cysteine 157, and cysteine 141–cysteine 155. Positions glutamine 164–isoleucine 177 are predicted alpha-helix. Tryptophan 181 is modified (tryptophan amide).

Belongs to the neurotoxin 19 (CSTX) family. Double-CSTX subfamily. In terms of processing, cleavage of the propeptide depends on the processing quadruplet motif (XXXR, with at least one of X being E). Expressed by the venom gland.

The protein localises to the secreted. It localises to the target cell membrane. Functionally, spider venom toxin that exhibits cytolytic activity by forming an alpha-helix across the membrane. Lethal to insect larvae. Causes instant paralysis and death in the larvae of the flesh fly (S.carnaria) at doses of 20 ug/g, at doses of less than 10 ug/g causes reversible paralysis. Has cytolytic activity against insect Sf9 cells. Causes stable and irreversible depolarization of fly muscle fibers, leading to contracture at higher toxin concentrations. Destabilizes membranes. The sequence is that of DELTA-miturgitoxin-Cp1c from Cheiracanthium punctorium (Yellow sac spider).